Reading from the N-terminus, the 879-residue chain is Translation initiation factor IF-2 (879 aa).

Disordered stretches follow at residues 45–216 (AGHM…ERKR) and 228–293 (SYEE…EKPV). Composition is skewed to basic and acidic residues over residues 60–72 (NAAK…DKNS), 83–99 (RKTD…KISP), and 107–163 (AEKK…ERLQ). Residues 164–173 (MEAALQAQMQ) are compositionally biased toward low complexity. 3 stretches are compositionally biased toward basic and acidic residues: residues 174–216 (EQER…ERKR), 228–271 (SYEE…ERRN), and 280–291 (RNNDNKKGKFEK). Residues 380 to 549 (VRAPVVTIMG…LIQAEMLELT (170 aa)) enclose the tr-type G domain. Residues 389 to 396 (GHVDHGKT) form a G1 region. A GTP-binding site is contributed by 389–396 (GHVDHGKT). Positions 414-418 (GITQH) are G2. The tract at residues 435 to 438 (DTPG) is G3. Residues 435-439 (DTPGH) and 489-492 (NKMD) contribute to the GTP site. The interval 489 to 492 (NKMD) is G4. Positions 525–527 (SAK) are G5.

This sequence belongs to the TRAFAC class translation factor GTPase superfamily. Classic translation factor GTPase family. IF-2 subfamily.

The protein localises to the cytoplasm. One of the essential components for the initiation of protein synthesis. Protects formylmethionyl-tRNA from spontaneous hydrolysis and promotes its binding to the 30S ribosomal subunits. Also involved in the hydrolysis of GTP during the formation of the 70S ribosomal complex. This Dichelobacter nodosus (strain VCS1703A) protein is Translation initiation factor IF-2.